Reading from the N-terminus, the 255-residue chain is Triosephosphate isomerase (255 aa).

9–11 (NWK) lines the substrate pocket. The Electrophile role is filled by histidine 95. Glutamate 167 serves as the catalytic Proton acceptor. Substrate-binding positions include glycine 173, serine 212, and 233–234 (GG).

It belongs to the triosephosphate isomerase family. Homodimer.

It is found in the cytoplasm. The catalysed reaction is D-glyceraldehyde 3-phosphate = dihydroxyacetone phosphate. Its pathway is carbohydrate biosynthesis; gluconeogenesis. The protein operates within carbohydrate degradation; glycolysis; D-glyceraldehyde 3-phosphate from glycerone phosphate: step 1/1. In terms of biological role, involved in the gluconeogenesis. Catalyzes stereospecifically the conversion of dihydroxyacetone phosphate (DHAP) to D-glyceraldehyde-3-phosphate (G3P). This is Triosephosphate isomerase from Klebsiella pneumoniae.